Here is a 157-residue protein sequence, read N- to C-terminus: MSRRRRAEKRQVLPDPKFGDLIVTKFMNYVMYEGKKAVAENIIYGAFDILENKRKDQGPLETFHSALDNVAPAIEVRSRRVGGATYQVPVEVRPDRRRALAIRWLVTAARKRGENTMTEKLAGELLDASNNRGTAVKKREDTHKMAEANRAFSHYRW.

Belongs to the universal ribosomal protein uS7 family. In terms of assembly, part of the 30S ribosomal subunit. Contacts proteins S9 and S11.

Functionally, one of the primary rRNA binding proteins, it binds directly to 16S rRNA where it nucleates assembly of the head domain of the 30S subunit. Is located at the subunit interface close to the decoding center, probably blocks exit of the E-site tRNA. The sequence is that of Small ribosomal subunit protein uS7 from Caulobacter sp. (strain K31).